A 156-amino-acid chain; its full sequence is Transcription inhibitor protein Gfh1 (156 aa).

The stretch at M1–I74 forms a coiled coil. Residues E20 and E24 each contribute to the Zn(2+) site.

Belongs to the GreA/GreB family. As to quaternary structure, interacts with RNAP.

In terms of biological role, inhibits all catalytic activities of RNA polymerase (RNAP) by partially occluding its substrate-binding site and preventing NTP binding. The protein is Transcription inhibitor protein Gfh1 (gfh1) of Thermus thermophilus (strain ATCC 27634 / DSM 579 / HB8).